The following is a 67-amino-acid chain: MQNPTQKVISFSEHKADIERIKKEIEEGWAIVKLVPNKDRFIGLLEKISDPKDETIYIPPRKKIIMN.

This is an uncharacterized protein from Rickettsia prowazekii (strain Madrid E).